A 902-amino-acid chain; its full sequence is Chloride channel protein 2 (902 aa).

Residues 1-89 (MAASAAAAGE…RCHKFLVSRV (89 aa)) lie on the Cytoplasmic side of the membrane. Residues 18–36 (QYEQTLMYGRYTQELGAFA) are essential for channel gating by both voltage and cell volume. The residue at position 22 (T22) is a Phosphothreonine. The tract at residues 38–51 (EEAARIRLGGPEPW) is modulates channel gating by both voltage and cell volume. A run of 2 helical transmembrane segments spans residues 90 to 123 (GEDW…AQQW) and 132 to 157 (ILLQ…TQIL). The Selectivity filter part_1 motif lies at 163 to 167 (GSGIP). The helical intramembrane region spans 166 to 173 (IPEMKTIL). 2 helical membrane passes run 182 to 200 (LTLK…ALGS) and 207 to 225 (EGPF…SKFL). A Selectivity filter part_2 motif is present at residues 205-209 (GKEGP). Intramembrane regions (helical) lie at residues 241–253 (MLAA…VGCC) and 257–265 (PIGGVLFSI). Transmembrane regions (helical) follow at residues 277-297 (YWRG…LAVW), 323-351 (LPAF…VQVM), 360-379 (FLMR…ISTL), 431-451 (ANVF…SALA), and 459-482 (GAFM…MAAW). Residues 459–463 (GAFMP) carry the Selectivity filter part_3 motif. The helical intramembrane region spans 499–513 (GGYAVVGAAALAGAV). Residues 514–515 (TH) constitute an intramembrane region (note=Loop between two helices). The helical intramembrane region spans 516 to 527 (TVSTAVIVFELT). Residues 528-532 (GQIAH) constitute an intramembrane region (note=Loop between two helices). The chain crosses the membrane as a helical span at residues 533–550 (ILPVMIAVILANAVAQSL). The Cytoplasmic segment spans residues 551–902 (QPSLYDSIIR…SPSDSDDKCQ (352 aa)). The 59-residue stretch at 586 to 644 (MVRDVPYVALNCTFRDLRLALHRTKGRMLALVESSESMILLGSIERSQVVTLLGAQLSA) folds into the CBS 1 domain. The segment at 648–748 (RQHIQERRKA…TSDLEKPESC (101 aa)) is disordered. Polar residues-rich tracts occupy residues 671–683 (PESS…NTED) and 706–719 (SNAS…TGSM). The CBS 2 domain maps to 794–854 (IDPAPFQLVE…GSVTAQGVKV (61 aa)). Residues 816 to 817 (LL) carry the Basolateral membrane sorting motif. The segment at 860–902 (SFRDSATSSSDTETTEVHALWGPHSCHGLPRDGSPSDSDDKCQ) is disordered.

Belongs to the chloride channel (TC 2.A.49) family. ClC-2/CLCN2 subfamily. In terms of assembly, homodimer. Interacts with auxiliary subunit HEPACAM.

It localises to the cell membrane. The protein resides in the basolateral cell membrane. It is found in the cell projection. The protein localises to the dendritic spine membrane. Its subcellular location is the axon. It catalyses the reaction chloride(in) = chloride(out). The catalysed reaction is thiocyanate(in) = thiocyanate(out). The enzyme catalyses bromide(in) = bromide(out). It carries out the reaction nitrate(in) = nitrate(out). It catalyses the reaction iodide(out) = iodide(in). Common gate kinetics are down-regulated by intracellular ATP. Inhibited by AK-42, a derivative of meclofenamate. Inhibited by Cd(2+). Inhibited by Zn(2+) and PKC activation. Inhibited at acidic pH. CCLN2:HEPACAM channel conductance is up-regulated upon hypo-osmolarity. Functionally, voltage-gated and osmosensitive chloride channel. Forms a homodimeric channel where each subunit has its own ion conduction pathway. Conducts double-barreled currents controlled by two types of gates, two fast glutamate gates that control each subunit independently and a slow common gate that opens and shuts off both subunits simultaneously. Displays inward rectification currents activated upon membrane hyperpolarization and extracellular hypotonicity. Contributes to chloride conductance involved in neuron excitability. In hippocampal neurons, generates a significant part of resting membrane conductance and provides an additional chloride efflux pathway to prevent chloride accumulation in dendrites upon GABA receptor activation. In glia, associates with the auxiliary subunit HEPACAM/GlialCAM at astrocytic processes and myelinated fiber tracts where it may regulate transcellular chloride flux buffering extracellular chloride and potassium concentrations. Regulates aldosterone production in adrenal glands. The opening of CLCN2 channels at hyperpolarized membrane potentials in the glomerulosa causes cell membrane depolarization, activation of voltage-gated calcium channels and increased expression of aldosterone synthase, the rate-limiting enzyme for aldosterone biosynthesis. Contributes to chloride conductance in retinal pigment epithelium involved in phagocytosis of shed photoreceptor outer segments and photoreceptor renewal. Conducts chloride currents at the basolateral membrane of epithelial cells with a role in chloride reabsorption rather than secretion. Permeable to small monovalent anions with chloride &gt; thiocyanate &gt; bromide &gt; nitrate &gt; iodide ion selectivity. In Cavia porcellus (Guinea pig), this protein is Chloride channel protein 2 (CLCN2).